Consider the following 693-residue polypeptide: Elongation factor G (693 aa).

The region spanning 8-282 (EKTRNIGIMA…AVIDYLPSPL (275 aa)) is the tr-type G domain. Residues 17 to 24 (AHVDAGKT), 81 to 85 (DTPGH), and 135 to 138 (NKMD) each bind GTP.

Belongs to the TRAFAC class translation factor GTPase superfamily. Classic translation factor GTPase family. EF-G/EF-2 subfamily.

The protein resides in the cytoplasm. In terms of biological role, catalyzes the GTP-dependent ribosomal translocation step during translation elongation. During this step, the ribosome changes from the pre-translocational (PRE) to the post-translocational (POST) state as the newly formed A-site-bound peptidyl-tRNA and P-site-bound deacylated tRNA move to the P and E sites, respectively. Catalyzes the coordinated movement of the two tRNA molecules, the mRNA and conformational changes in the ribosome. The chain is Elongation factor G from Streptococcus pneumoniae (strain Hungary19A-6).